Consider the following 403-residue polypeptide: Phosphopentomutase (403 aa).

Mn(2+) contacts are provided by Asp-13, Asp-298, His-303, Asp-339, His-340, and His-351.

Belongs to the phosphopentomutase family. The cofactor is Mn(2+).

It localises to the cytoplasm. It carries out the reaction 2-deoxy-alpha-D-ribose 1-phosphate = 2-deoxy-D-ribose 5-phosphate. It catalyses the reaction alpha-D-ribose 1-phosphate = D-ribose 5-phosphate. Its pathway is carbohydrate degradation; 2-deoxy-D-ribose 1-phosphate degradation; D-glyceraldehyde 3-phosphate and acetaldehyde from 2-deoxy-alpha-D-ribose 1-phosphate: step 1/2. Functionally, isomerase that catalyzes the conversion of deoxy-ribose 1-phosphate (dRib-1-P) and ribose 1-phosphate (Rib-1-P) to deoxy-ribose 5-phosphate (dRib-5-P) and ribose 5-phosphate (Rib-5-P), respectively. The protein is Phosphopentomutase of Streptococcus equi subsp. zooepidemicus (strain MGCS10565).